The following is a 254-amino-acid chain: MERLEEARKRLEEAKRVAVLTGAGISKPSGIPTFRDAEGLWKNFNPLDYATPEAYARDPEKVWAWYAWRIQKVREAKPNPAHYALVELERRILSRGGSFLLVTQNVDGLHARAGSQNLVELHGNLLRARCEACGKRFPLPEAFAPPPFCPACGHRARPDVVWFGELLPEGAWERAERAFAEADFALVVGTSAEVEPAASLGRIAFASGAYLVEVNPEPTPLTPLAHLSLRTGAVEGMALLLPPSPEDQAEGHLS.

Positions 1–250 (MERLEEARKR…LPPSPEDQAE (250 aa)) constitute a Deacetylase sirtuin-type domain. 22–41 (GAGISKPSGIPTFRDAEGLW) serves as a coordination point for NAD(+). 2 residues coordinate substrate: Y66 and R69. Residue 104 to 107 (QNVD) participates in NAD(+) binding. Catalysis depends on H122, which acts as the Proton acceptor. C130, C133, C149, and C152 together coordinate Zn(2+). NAD(+)-binding positions include 189–191 (GTS), 215–217 (NPE), and A233.

Belongs to the sirtuin family. Class III subfamily. Requires Zn(2+) as cofactor.

The protein resides in the cytoplasm. The catalysed reaction is N(6)-acetyl-L-lysyl-[protein] + NAD(+) + H2O = 2''-O-acetyl-ADP-D-ribose + nicotinamide + L-lysyl-[protein]. It carries out the reaction N(6)-succinyl-L-lysyl-[protein] + NAD(+) + H2O = 2''-O-succinyl-ADP-D-ribose + nicotinamide + L-lysyl-[protein]. In terms of biological role, NAD-dependent lysine deacetylase and desuccinylase that specifically removes acetyl and succinyl groups on target proteins. Modulates the activities of several proteins which are inactive in their acylated form. This Thermus thermophilus (strain ATCC BAA-163 / DSM 7039 / HB27) protein is NAD-dependent protein deacylase.